The following is a 229-amino-acid chain: Large ribosomal subunit protein uL1 (229 aa).

This sequence belongs to the universal ribosomal protein uL1 family. As to quaternary structure, part of the 50S ribosomal subunit.

In terms of biological role, binds directly to 23S rRNA. The L1 stalk is quite mobile in the ribosome, and is involved in E site tRNA release. Its function is as follows. Protein L1 is also a translational repressor protein, it controls the translation of the L11 operon by binding to its mRNA. The polypeptide is Large ribosomal subunit protein uL1 (Mycoplasmopsis pulmonis (strain UAB CTIP) (Mycoplasma pulmonis)).